A 395-amino-acid chain; its full sequence is Ketol-acid reductoisomerase, mitochondrial (395 aa).

A mitochondrion-targeting transit peptide spans 1 to 47 (MLRTQAARLICNSRVITAKRTFALATRAAAYSRPAARFVKPMITTRG). Residues 57 to 246 (VETVYERADW…AIGSGYVYQT (190 aa)) form the KARI N-terminal Rossmann domain. Residues 84 to 93 (GYGSQGYGQG), 108 to 113 (RKDGAS), and 146 to 150 (SDAAQ) contribute to the NADP(+) site. His-171 is an active-site residue. Residues 247–394 (TFEREVNSDL…KEVRKLRPEN (148 aa)) enclose the KARI C-terminal knotted domain. Mg(2+) is bound by residues Asp-255, Glu-259, Glu-291, and Glu-295. Ser-317 is a binding site for substrate. The residue at position 355 (Ser-355) is a Phosphoserine. The hydrophilic stretch occupies residues 363–395 (DYREKLEKELDTIRNMEIWKVGKEVRKLRPENQ).

Belongs to the ketol-acid reductoisomerase family. Mg(2+) is required as a cofactor.

Its subcellular location is the mitochondrion. It catalyses the reaction (2R)-2,3-dihydroxy-3-methylbutanoate + NADP(+) = (2S)-2-acetolactate + NADPH + H(+). The catalysed reaction is (2R,3R)-2,3-dihydroxy-3-methylpentanoate + NADP(+) = (S)-2-ethyl-2-hydroxy-3-oxobutanoate + NADPH + H(+). It participates in amino-acid biosynthesis; L-isoleucine biosynthesis; L-isoleucine from 2-oxobutanoate: step 2/4. It functions in the pathway amino-acid biosynthesis; L-valine biosynthesis; L-valine from pyruvate: step 2/4. Its function is as follows. Involved in the biosynthesis of branched-chain amino acids (BCAA). Catalyzes the second common step in the parallel biosynthesis of isoleucine and valine. Converts alpha-aceto-alpha-hydroxybutyrate (AHB) to alpha,beta-dihydroxy-beta-methylvalerate (DHMV) and alpha-acetolactate (AL) to alpha,beta-dihydroxy-isovalerate (DHV) in isoleucine and valine biosynthesis, respectively. The protein is Ketol-acid reductoisomerase, mitochondrial of Saccharomyces cerevisiae (strain ATCC 204508 / S288c) (Baker's yeast).